Here is a 469-residue protein sequence, read N- to C-terminus: Glutamate--tRNA ligase (469 aa).

A 'HIGH' region motif is present at residues 9–19 (PSPTGFLHVGG). 4 residues coordinate Zn(2+): Cys98, Cys100, Cys125, and Asp127. Positions 236–240 (KLSKR) match the 'KMSKS' region motif. Lys239 contacts ATP.

The protein belongs to the class-I aminoacyl-tRNA synthetase family. Glutamate--tRNA ligase type 1 subfamily. In terms of assembly, monomer. Zn(2+) serves as cofactor.

It localises to the cytoplasm. It carries out the reaction tRNA(Glu) + L-glutamate + ATP = L-glutamyl-tRNA(Glu) + AMP + diphosphate. In terms of biological role, catalyzes the attachment of glutamate to tRNA(Glu) in a two-step reaction: glutamate is first activated by ATP to form Glu-AMP and then transferred to the acceptor end of tRNA(Glu). This is Glutamate--tRNA ligase from Shewanella baltica (strain OS185).